The following is an 801-amino-acid chain: Cadherin-20 (801 aa).

An N-terminal signal peptide occupies residues 1-34 (MWTTGRMSNAKSWLGLGTSLYFWALMDLATTVLS). A propeptide spanning residues 35 to 59 (STPMPEVELDTLFSGKPQSHQRSRR) is cleaved from the precursor. The Extracellular portion of the chain corresponds to 60-619 (SWVWNQFFVL…AYMLPVSLSR (560 aa)). Cadherin domains follow at residues 61 to 165 (WVWN…EPKF), 166 to 274 (LDGP…PPRF), 275 to 389 (PQKH…PPVF), 390 to 494 (EPRF…APEF), and 494 to 610 (FPRF…SPEA). A glycan (N-linked (GlcNAc...) asparagine) is linked at Asn-261. 3 N-linked (GlcNAc...) asparagine glycosylation sites follow: Asn-420, Asn-461, and Asn-542. Residues 620–640 (GALIAILACVFVLLVLVLLIL) form a helical membrane-spanning segment. Topologically, residues 641–801 (SMRRHRKQPY…GASEGPSPLW (161 aa)) are cytoplasmic.

The protein localises to the cell membrane. Functionally, cadherins are calcium-dependent cell adhesion proteins. They preferentially interact with themselves in a homophilic manner in connecting cells; cadherins may thus contribute to the sorting of heterogeneous cell types. The polypeptide is Cadherin-20 (Cdh20) (Rattus norvegicus (Rat)).